Reading from the N-terminus, the 123-residue chain is Large ribosomal subunit protein bL12 (123 aa).

This sequence belongs to the bacterial ribosomal protein bL12 family. As to quaternary structure, homodimer. Part of the ribosomal stalk of the 50S ribosomal subunit. Forms a multimeric L10(L12)X complex, where L10 forms an elongated spine to which 2 to 4 L12 dimers bind in a sequential fashion. Binds GTP-bound translation factors.

In terms of biological role, forms part of the ribosomal stalk which helps the ribosome interact with GTP-bound translation factors. Is thus essential for accurate translation. The sequence is that of Large ribosomal subunit protein bL12 from Ectopseudomonas mendocina (strain ymp) (Pseudomonas mendocina).